The primary structure comprises 451 residues: Bifunctional protein GlmU (451 aa).

The pyrophosphorylase stretch occupies residues 1–229 (MERFAVILAA…FDETIGVNDR (229 aa)). Residues 8 to 11 (LAAG), Lys22, Gln72, and 77 to 78 (GT) each bind UDP-N-acetyl-alpha-D-glucosamine. Asp102 lines the Mg(2+) pocket. Positions 139, 154, 169, and 227 each coordinate UDP-N-acetyl-alpha-D-glucosamine. Asn227 is a Mg(2+) binding site. Residues 230–250 (VALSQAEAIMRKRTNERLMRE) form a linker region. The N-acetyltransferase stretch occupies residues 251–451 (GVTFMDPAST…QTNKEGYTKR (201 aa)). UDP-N-acetyl-alpha-D-glucosamine contacts are provided by Arg332 and Lys350. His362 serves as the catalytic Proton acceptor. 2 residues coordinate UDP-N-acetyl-alpha-D-glucosamine: Tyr365 and Asn376. Acetyl-CoA contacts are provided by residues 385 to 386 (NY), Ala422, and Arg439.

The protein in the N-terminal section; belongs to the N-acetylglucosamine-1-phosphate uridyltransferase family. This sequence in the C-terminal section; belongs to the transferase hexapeptide repeat family. In terms of assembly, homotrimer. The cofactor is Mg(2+).

Its subcellular location is the cytoplasm. The catalysed reaction is alpha-D-glucosamine 1-phosphate + acetyl-CoA = N-acetyl-alpha-D-glucosamine 1-phosphate + CoA + H(+). It carries out the reaction N-acetyl-alpha-D-glucosamine 1-phosphate + UTP + H(+) = UDP-N-acetyl-alpha-D-glucosamine + diphosphate. Its pathway is nucleotide-sugar biosynthesis; UDP-N-acetyl-alpha-D-glucosamine biosynthesis; N-acetyl-alpha-D-glucosamine 1-phosphate from alpha-D-glucosamine 6-phosphate (route II): step 2/2. The protein operates within nucleotide-sugar biosynthesis; UDP-N-acetyl-alpha-D-glucosamine biosynthesis; UDP-N-acetyl-alpha-D-glucosamine from N-acetyl-alpha-D-glucosamine 1-phosphate: step 1/1. It functions in the pathway bacterial outer membrane biogenesis; LPS lipid A biosynthesis. Catalyzes the last two sequential reactions in the de novo biosynthetic pathway for UDP-N-acetylglucosamine (UDP-GlcNAc). The C-terminal domain catalyzes the transfer of acetyl group from acetyl coenzyme A to glucosamine-1-phosphate (GlcN-1-P) to produce N-acetylglucosamine-1-phosphate (GlcNAc-1-P), which is converted into UDP-GlcNAc by the transfer of uridine 5-monophosphate (from uridine 5-triphosphate), a reaction catalyzed by the N-terminal domain. This is Bifunctional protein GlmU from Exiguobacterium sp. (strain ATCC BAA-1283 / AT1b).